A 329-amino-acid polypeptide reads, in one-letter code: Cathepsin K (329 aa).

A signal peptide spans 1–15; sequence MWGLKVLLLPVMSFA. Positions 16 to 114 are cleaved as a propeptide — activation peptide; it reads LYPEEILDTH…TLYIPDWEGR (99 aa). N-linked (GlcNAc...) asparagine glycosylation occurs at N103. 3 cysteine pairs are disulfide-bonded: C136-C177, C170-C210, and C269-C318. C139 is a catalytic residue. Active-site residues include H276 and N296.

This sequence belongs to the peptidase C1 family.

The protein resides in the lysosome. It is found in the secreted. It localises to the apical cell membrane. The catalysed reaction is Broad proteolytic activity. With small-molecule substrates and inhibitors, the major determinant of specificity is P2, which is preferably Leu, Met &gt; Phe, and not Arg.. In terms of biological role, thiol protease involved in osteoclastic bone resorption and may participate partially in the disorder of bone remodeling. Displays potent endoprotease activity against fibrinogen at acid pH. May play an important role in extracellular matrix degradation. Involved in the release of thyroid hormone thyroxine (T4) by limited proteolysis of TG/thyroglobulin in the thyroid follicle lumen. The polypeptide is Cathepsin K (CTSK) (Macaca fascicularis (Crab-eating macaque)).